Reading from the N-terminus, the 571-residue chain is Decapping 5-like protein (571 aa).

A compositionally biased stretch (low complexity) spans 1–17; the sequence is MASESSQSSSPSSSQPP. Disordered stretches follow at residues 1–27, 102–141, 159–187, and 258–305; these read MASE…SPGN, LQVN…ISGY, LSSK…GSLT, and SQVV…SEAQ. In terms of domain architecture, Sm spans 25–108; sequence PGNNVGDTFI…IKDLQVNPSP (84 aa). 2 stretches are compositionally biased toward polar residues: residues 104–138 and 167–187; these read VNPS…SSPI and TQHS…GSLT. The segment covering 264–279 has biased composition (low complexity); that stretch reads SPDVSSNQSYSSNPSP. Positions 293–305 are enriched in polar residues; it reads SVSSNLSPPSEAQ. Residues 419 to 455 form the DFDF domain; that stretch reads RIPSSSIEYTEEFDFEAMNEKFKKSELWGYLGRNNQR. Positions 474-489 match the FFD box motif; it reads PAYNKDDFFDTISCNQ. Positions 498–518 match the TFG box motif; sequence QQHNQFPEHMRQVPEAFGNNF.

It belongs to the LSM14 family. As to quaternary structure, homodimer. Component of the decapping complex.

It is found in the cytoplasm. The protein resides in the P-body. In terms of biological role, as a component of the decapping complex, involved in the degradation of mRNAs. Promotes P-body formation. Translational repressor. The sequence is that of Decapping 5-like protein (DCP5-L) from Arabidopsis thaliana (Mouse-ear cress).